The chain runs to 66 residues: MPKMKTKSAAKKRFKITGTGKVKAAAAGKRHGMIKRSNKFIRDARGTMVLADADAKIVKQFLPNGL.

Belongs to the bacterial ribosomal protein bL35 family.

In Brucella melitensis biotype 1 (strain ATCC 23456 / CCUG 17765 / NCTC 10094 / 16M), this protein is Large ribosomal subunit protein bL35.